The following is a 349-amino-acid chain: Phosphoribosylformylglycinamidine cyclo-ligase (349 aa).

Belongs to the AIR synthase family.

The protein localises to the cytoplasm. It carries out the reaction 2-formamido-N(1)-(5-O-phospho-beta-D-ribosyl)acetamidine + ATP = 5-amino-1-(5-phospho-beta-D-ribosyl)imidazole + ADP + phosphate + H(+). Its pathway is purine metabolism; IMP biosynthesis via de novo pathway; 5-amino-1-(5-phospho-D-ribosyl)imidazole from N(2)-formyl-N(1)-(5-phospho-D-ribosyl)glycinamide: step 2/2. The sequence is that of Phosphoribosylformylglycinamidine cyclo-ligase from Methanococcus maripaludis (strain C6 / ATCC BAA-1332).